The chain runs to 186 residues: Probable calcium-binding protein CML25 (186 aa).

A compositionally biased stretch (low complexity) spans 1-17 (MFNKNQGSNGGSSSNVG). Residues 1–23 (MFNKNQGSNGGSSSNVGIGADSP) form a disordered region. EF-hand domains lie at 33-68 (TEIR…LGHE), 69-104 (VPEE…GMDQ), 106-141 (DVLE…LGDE), and 142-177 (CSIA…GSRR). Residues Asp46, Asn48, Asp50, Lys52, and Glu57 each contribute to the Ca(2+) site. 10 residues coordinate Ca(2+): Asp119, Asp121, Asn123, Ser125, Glu130, Asp155, Asp157, Asp159, Thr161, and Glu166.

In terms of biological role, potential calcium sensor. The polypeptide is Probable calcium-binding protein CML25 (CML25) (Arabidopsis thaliana (Mouse-ear cress)).